The chain runs to 203 residues: Cell division protein SepF (203 aa).

2 disordered regions span residues 26–51 (DGEL…RRGQ) and 167–203 (GTAS…WRNQ). Basic and acidic residues-rich tracts occupy residues 39–50 (EPPRRSAPERRG) and 183–203 (RRSE…WRNQ).

It belongs to the SepF family. As to quaternary structure, homodimer. Interacts with FtsZ.

The protein resides in the cytoplasm. In terms of biological role, cell division protein that is part of the divisome complex and is recruited early to the Z-ring. Probably stimulates Z-ring formation, perhaps through the cross-linking of FtsZ protofilaments. Its function overlaps with FtsA. This is Cell division protein SepF from Symbiobacterium thermophilum (strain DSM 24528 / JCM 14929 / IAM 14863 / T).